The sequence spans 150 residues: MRCPFCGYEDTFVIDTREIEDQRVIRRRRECPNCKNRFTTYERIEEKPIMVIKKDGRREPFDRNKLLAGLQRAVVKRNIDNEKLEAIIDEIIANIRKQGISEITSKEIGKMVLEKLKDLDAVAYVRFASVYQEFSSLEEFAKLLSQMKKE.

The segment at 3–34 (CPFCGYEDTFVIDTREIEDQRVIRRRRECPNC) is a zinc-finger region. Residues 49–139 (IMVIKKDGRR…VYQEFSSLEE (91 aa)) enclose the ATP-cone domain.

Belongs to the NrdR family. Zn(2+) is required as a cofactor.

Functionally, negatively regulates transcription of bacterial ribonucleotide reductase nrd genes and operons by binding to NrdR-boxes. The chain is Transcriptional repressor NrdR from Dictyoglomus thermophilum (strain ATCC 35947 / DSM 3960 / H-6-12).